Here is a 192-residue protein sequence, read N- to C-terminus: Thymidine kinase (192 aa).

Residues S9–T16 and D88–H91 each bind ATP. E89 functions as the Proton acceptor in the catalytic mechanism. Positions 146, 148, 183, and 186 each coordinate Zn(2+).

It belongs to the thymidine kinase family. As to quaternary structure, homotetramer.

The protein localises to the cytoplasm. The catalysed reaction is thymidine + ATP = dTMP + ADP + H(+). The chain is Thymidine kinase from Blochmanniella floridana.